The chain runs to 129 residues: Small ribosomal subunit protein uS11 (129 aa).

The protein belongs to the universal ribosomal protein uS11 family. In terms of assembly, part of the 30S ribosomal subunit. Interacts with proteins S7 and S18. Binds to IF-3.

Functionally, located on the platform of the 30S subunit, it bridges several disparate RNA helices of the 16S rRNA. Forms part of the Shine-Dalgarno cleft in the 70S ribosome. In Yersinia enterocolitica serotype O:8 / biotype 1B (strain NCTC 13174 / 8081), this protein is Small ribosomal subunit protein uS11.